A 448-amino-acid polypeptide reads, in one-letter code: Glucose-6-phosphate isomerase (448 aa).

The active-site Proton donor is the glutamate 290. Catalysis depends on residues histidine 311 and lysine 425.

This sequence belongs to the GPI family.

It is found in the cytoplasm. It carries out the reaction alpha-D-glucose 6-phosphate = beta-D-fructose 6-phosphate. It functions in the pathway carbohydrate biosynthesis; gluconeogenesis. The protein operates within carbohydrate degradation; glycolysis; D-glyceraldehyde 3-phosphate and glycerone phosphate from D-glucose: step 2/4. Catalyzes the reversible isomerization of glucose-6-phosphate to fructose-6-phosphate. The polypeptide is Glucose-6-phosphate isomerase (Levilactobacillus brevis (strain ATCC 367 / BCRC 12310 / CIP 105137 / JCM 1170 / LMG 11437 / NCIMB 947 / NCTC 947) (Lactobacillus brevis)).